Consider the following 356-residue polypeptide: Histidinol-phosphate aminotransferase (356 aa).

An N6-(pyridoxal phosphate)lysine modification is found at Lys-222.

It belongs to the class-II pyridoxal-phosphate-dependent aminotransferase family. Histidinol-phosphate aminotransferase subfamily. As to quaternary structure, homodimer. Pyridoxal 5'-phosphate is required as a cofactor.

It catalyses the reaction L-histidinol phosphate + 2-oxoglutarate = 3-(imidazol-4-yl)-2-oxopropyl phosphate + L-glutamate. The protein operates within amino-acid biosynthesis; L-histidine biosynthesis; L-histidine from 5-phospho-alpha-D-ribose 1-diphosphate: step 7/9. This chain is Histidinol-phosphate aminotransferase, found in Lactiplantibacillus plantarum (strain ATCC BAA-793 / NCIMB 8826 / WCFS1) (Lactobacillus plantarum).